The following is a 257-amino-acid chain: Large ribosomal subunit protein uL2 (257 aa).

Glycyl lysine isopeptide (Lys-Gly) (interchain with G-Cter in SUMO2) cross-links involve residues Lys-42 and Lys-149. The disordered stretch occupies residues 207–232; that stretch reads VEHPFGGGNHQHIGKPSTIRRDAPAG. At His-216 the chain carries (3S)-3-hydroxyhistidine. Glycyl lysine isopeptide (Lys-Gly) (interchain with G-Cter in SUMO2) cross-links involve residues Lys-234 and Lys-250.

The protein belongs to the universal ribosomal protein uL2 family. Component of the large ribosomal subunit. Interacts with CRY1. Post-translationally, hydroxylated on His-216 by RIOX1. The modification is impaired by hypoxia.

The protein resides in the cytoplasm. Component of the large ribosomal subunit. The ribosome is a large ribonucleoprotein complex responsible for the synthesis of proteins in the cell. In Bos taurus (Bovine), this protein is Large ribosomal subunit protein uL2 (RPL8).